The sequence spans 479 residues: Neuronal acetylcholine receptor subunit alpha-9 (479 aa).

The signal sequence occupies residues 1–25; the sequence is MNRPHSCLSFCWMYFAASGIRAVET. Topologically, residues 26–237 are extracellular; it reads ANGKYAQKLF…TFTLLLKRRS (212 aa). An N-linked (GlcNAc...) asparagine glycan is attached at Asn57. A disulfide bridge links Cys155 with Cys169. Asn170 carries an N-linked (GlcNAc...) asparagine glycan. Ser191 and Asp193 together coordinate Na(+). An intrachain disulfide couples Cys219 to Cys220. 3 helical membrane-spanning segments follow: residues 238-262, 269-287, and 302-323; these read SFYI…FYLP, VSLG…LMVA, and YYIA…VMNI. Topologically, residues 324–457 are cytoplasmic; the sequence is HFCGAEARPV…WKKVAKVIDR (134 aa). Residues 458–476 traverse the membrane as a helical segment; sequence FFMWIFFAMVFVMTVLIIA.

This sequence belongs to the ligand-gated ion channel (TC 1.A.9) family. Acetylcholine receptor (TC 1.A.9.1) subfamily. Alpha-9/CHRNA9 sub-subfamily. In terms of assembly, forms homo- or heterooligomeric channels in conjunction with CHRNA10. The native outer hair cell receptor may be composed of CHRNA9:CHRNA10 heterooligomers. Found in the stoichiometric form (CHRNA9)2:(CHRNA10)3. Detected in the nasal epithelium, in the outer hair cells of the cochlea, in the pars tuberalis of the hypophysis, and in the developing muscle of the tongue. Also expressed in the neurons of dorsal root ganglia.

It localises to the synaptic cell membrane. Its subcellular location is the cell membrane. It catalyses the reaction Ca(2+)(in) = Ca(2+)(out). The enzyme catalyses Mg(2+)(in) = Mg(2+)(out). It carries out the reaction K(+)(in) = K(+)(out). The catalysed reaction is Na(+)(in) = Na(+)(out). Activated by a myriad of ligands such as acetylcholine. AChR activity is inhibited by the antagonist alpha-conotoxins RgIA and GeXXA, small disulfide-constrained peptides from cone snails. In terms of biological role, component of neuronal acetylcholine receptors (nAChRs) that function as pentameric, ligand-gated cation channels with high calcium permeability among other activities. nAChRs are excitatory neurotrasnmitter receptors formed by a collection of nAChR subunits known to mediate synaptic transmission in the nervous system and the neuromuscular junction. Each nAchR subunit confers differential attributes to channel properties, including activation, deactivation and desensitization kinetics, pH sensitivity, cation permeability, and binding to allosteric modulators. Forms either homopentamers or heteropentamers with CHRNA10. Expressed in the inner ear, in sympathetic neurons and in other non-neuronal cells, such as skin keratinocytes and lymphocytes. nAChR formed by CHRNA9:CHRNA10 mediate central nervous system control of auditory and vestibular sensory processing. The channel is permeable to a range of divalent cations including calcium, the influx of which may activate a potassium current which hyperpolarizes the cell membrane. In the ear, mediates synaptic transmission between efferent olivocochlear fibers and hair cells of the cochlea, this may lead to a reduction in basilar membrane motion, altering the activity of auditory nerve fibers and reducing the range of dynamic hearing. This may protect against acoustic trauma. May also regulate keratinocyte adhesion. In Rattus norvegicus (Rat), this protein is Neuronal acetylcholine receptor subunit alpha-9 (Chrna9).